The chain runs to 436 residues: Mannitol-binding protein (436 aa).

A signal peptide spans 1–22 (MNDSIKACLAAACLALPLLAQG).

This sequence belongs to the bacterial solute-binding protein 1 family.

Its subcellular location is the periplasm. Its function is as follows. Binds mannitol with high affinity. The polypeptide is Mannitol-binding protein (Pseudomonas aeruginosa (strain ATCC 15692 / DSM 22644 / CIP 104116 / JCM 14847 / LMG 12228 / 1C / PRS 101 / PAO1)).